The sequence spans 212 residues: Methylthioribulose-1-phosphate dehydratase (212 aa).

Zn(2+)-binding residues include H97 and H99.

It belongs to the aldolase class II family. MtnB subfamily. As to quaternary structure, homotetramer. It depends on Zn(2+) as a cofactor.

The catalysed reaction is 5-(methylsulfanyl)-D-ribulose 1-phosphate = 5-methylsulfanyl-2,3-dioxopentyl phosphate + H2O. It functions in the pathway amino-acid biosynthesis; L-methionine biosynthesis via salvage pathway; L-methionine from S-methyl-5-thio-alpha-D-ribose 1-phosphate: step 2/6. Catalyzes the dehydration of methylthioribulose-1-phosphate (MTRu-1-P) into 2,3-diketo-5-methylthiopentyl-1-phosphate (DK-MTP-1-P). In Bacillus cytotoxicus (strain DSM 22905 / CIP 110041 / 391-98 / NVH 391-98), this protein is Methylthioribulose-1-phosphate dehydratase.